The chain runs to 420 residues: Carbohydrate sulfotransferase 1 (420 aa).

Met-1 is a topological domain (cytoplasmic). A helical; Signal-anchor for type II membrane protein transmembrane segment spans residues Gln-2–Ile-23. Residues Arg-24–Leu-420 are Lumenal-facing. A glycan (N-linked (GlcNAc...) asparagine) is linked at Asn-64. Thr-77–Phe-83 is a 3'-phosphoadenylyl sulfate binding site. N-linked (GlcNAc...) asparagine glycans are attached at residues Asn-153 and Asn-197. Position 242–250 (Arg-242–Ser-250) interacts with 3'-phosphoadenylyl sulfate. N-linked (GlcNAc...) asparagine glycans are attached at residues Asn-342 and Asn-405.

It belongs to the sulfotransferase 1 family. Gal/GlcNAc/GalNAc subfamily.

The protein localises to the golgi apparatus membrane. It carries out the reaction 3'-phosphoadenylyl sulfate + keratan = adenosine 3',5'-bisphosphate + keratan 6'-sulfate.. In terms of biological role, sulfotransferase that utilizes 3'-phospho-5'-adenylyl sulfate (PAPS) as sulfonate donor to catalyze the transfer of sulfate to position 6 of galactose (Gal) residues of keratan. The polypeptide is Carbohydrate sulfotransferase 1 (chst1) (Danio rerio (Zebrafish)).